The sequence spans 1392 residues: DNA-directed RNA polymerase subunit beta' (1392 aa).

The Zn(2+) site is built by Cys-70, Cys-72, Cys-85, and Cys-88. Mg(2+)-binding residues include Asp-460, Asp-462, and Asp-464. Zn(2+) contacts are provided by Cys-810, Cys-884, Cys-891, and Cys-894.

This sequence belongs to the RNA polymerase beta' chain family. As to quaternary structure, the RNAP catalytic core consists of 2 alpha, 1 beta, 1 beta' and 1 omega subunit. When a sigma factor is associated with the core the holoenzyme is formed, which can initiate transcription. Requires Mg(2+) as cofactor. Zn(2+) is required as a cofactor.

It carries out the reaction RNA(n) + a ribonucleoside 5'-triphosphate = RNA(n+1) + diphosphate. Functionally, DNA-dependent RNA polymerase catalyzes the transcription of DNA into RNA using the four ribonucleoside triphosphates as substrates. The sequence is that of DNA-directed RNA polymerase subunit beta' from Geobacter metallireducens (strain ATCC 53774 / DSM 7210 / GS-15).